The sequence spans 269 residues: Phycobilisome 37.5 kDa linker polypeptide, phycocyanin-associated, rod (269 aa).

A PBS-linker domain is found at 2-177 (TSSTAARQLG…IYRGYANSDR (176 aa)). The region spanning 217–269 (GQLYRVRVIQADRGRTTQIRRSIQEYLVSYDQLSPTLQRLNQRGSRVVNISPA) is the CpcD-like domain.

It belongs to the phycobilisome linker protein family.

The protein localises to the cellular thylakoid membrane. Its function is as follows. Rod linker protein, associated with phycocyanin. Linker polypeptides determine the state of aggregation and the location of the disk-shaped phycobiliprotein units within the phycobilisome and modulate their spectroscopic properties in order to mediate a directed and optimal energy transfer. The sequence is that of Phycobilisome 37.5 kDa linker polypeptide, phycocyanin-associated, rod (cpcH2) from Microchaete diplosiphon (Fremyella diplosiphon).